We begin with the raw amino-acid sequence, 1096 residues long: Inactive phospholipase C-like protein 1 (1096 aa).

Residues 1 to 101 form a disordered region; sequence MAEGAASREA…KKTVSFSSMP (101 aa). Low complexity predominate over residues 26-41; that stretch reads GADAASGDAAPEASGG. Residues serine 48 and serine 78 each carry the phosphoserine modification. Residues 83 to 222 form an interaction with PPP1C region; that stretch reads PSNQKCGGRK…NIWVSGLRYL (140 aa). Threonine 94 is subject to Phosphothreonine. Serine 96 carries the phosphoserine modification. The region spanning 114-224 is the PH domain; it reads SFMQAGCELK…WVSGLRYLVS (111 aa). The 145-residue stretch at 399-543 folds into the PI-PLC X-box domain; it reads QDMTQPLSHY…LKHMIIVKGK (145 aa). The tract at residues 544–568 is interaction with GABA A beta subunit; the sequence is KLPSESDLLEGEVTDEDEEAEMSRR. Threonine 557 is subject to Phosphothreonine. The residue at position 570 (serine 570) is a Phosphoserine. One can recognise a PI-PLC Y-box domain in the interval 586–702; it reads LSDLVSICKS…GYVLRPSIMR (117 aa). The C2 domain maps to 702–831; that stretch reads RDEVSYFSAN…PGYRHVPLRS (130 aa). Residues 1040–1060 are a coiled coil; it reads DLLKNAKNEAVENIKQIQLAC. The disordered stretch occupies residues 1067–1096; it reads KGPGSAAEAKGKRSLEAIEEKESSEENGKL. Residues 1075–1096 show a composition bias toward basic and acidic residues; it reads AKGKRSLEAIEEKESSEENGKL. Serine 1080 carries the post-translational modification Phosphoserine.

It belongs to the PRIP family. Interacts with PPP2CA, GABA receptor beta subunits, GABA receptor gamma-2 subunits. Interacts with Ins(1,4,5)P3, Ins(1,4,5,6)P4, GABARAP, and PPP1C. May form a ternary complex with GABA receptor beta subunit and GABARAP. The formation of a ternary complex with GABA receptor beta subunit and GABARAP could be the key step for facilitating the association of GABARAP with the GABA receptor gamma-2 subunit and to allow it to be transported at the right destination. In terms of processing, phosphorylation of Thr-94 resulted in dissociation of PPP1C from PRIP1. In vitro, phosphorylated by the catalytic subunit of PKA. Expressed in brain. Found in the granular cell and Purkinje cell layers in the cerebellum; and in the hippocampal pyramidal cells, dentate granule cells and pyramidal granule cells of the cerebral cortex in the cerebrum.

It localises to the cytoplasm. Its function is as follows. Involved in an inositol phospholipid-based intracellular signaling cascade. Shows no PLC activity to phosphatidylinositol 4,5-bisphosphate and phosphatidylinositol. Component in the phospho-dependent endocytosis process of GABA A receptor. Acts as an inhibitor of PPP1C. In Rattus norvegicus (Rat), this protein is Inactive phospholipase C-like protein 1 (Plcl1).